A 472-amino-acid chain; its full sequence is PEP-dependent dihydroxyacetone kinase, phosphoryl donor subunit DhaM (472 aa).

The 135-residue stretch at 1-135 (MVNLVIVSHS…HALEAKREQL (135 aa)) folds into the PTS EIIA type-4 domain. Catalysis depends on His-9, which acts as the Tele-phosphohistidine intermediate. The 88-residue stretch at 155–242 (ARSLAVVIKN…QLAEDNFGET (88 aa)) folds into the HPr domain. His-169 functions as the Pros-phosphohistidine intermediate in the catalytic mechanism. Residues 264 to 472 (QPVLCTVQAK…VKTQRFNRQG (209 aa)) are PTS EI-like, N-terminal part. His-430 (tele-phosphohistidine intermediate) is an active-site residue.

Belongs to the PEP-utilizing enzyme family. As to quaternary structure, homodimer. The dihydroxyacetone kinase complex is composed of a homodimer of DhaM, a homodimer of DhaK and the subunit DhaL.

It catalyses the reaction dihydroxyacetone + phosphoenolpyruvate = dihydroxyacetone phosphate + pyruvate. The protein operates within polyol metabolism; glycerol degradation. In terms of biological role, component of the dihydroxyacetone kinase complex, which is responsible for the phosphoenolpyruvate (PEP)-dependent phosphorylation of dihydroxyacetone. DhaM serves as the phosphoryl donor. Is phosphorylated by phosphoenolpyruvate in an EI- and HPr-dependent reaction, and a phosphorelay system on histidine residues finally leads to phosphoryl transfer to DhaL and dihydroxyacetone. The chain is PEP-dependent dihydroxyacetone kinase, phosphoryl donor subunit DhaM from Escherichia coli (strain K12).